Consider the following 373-residue polypeptide: Ribonuclease D (373 aa).

The 169-residue stretch at 3–171 (YQLITTDAGL…MAKRLVQETE (169 aa)) folds into the 3'-5' exonuclease domain. Residues 210 to 289 (RPRQLGCLQK…AEAAELEESA (80 aa)) form the HRDC domain.

Belongs to the RNase D family. A divalent metal cation serves as cofactor.

The protein localises to the cytoplasm. It carries out the reaction Exonucleolytic cleavage that removes extra residues from the 3'-terminus of tRNA to produce 5'-mononucleotides.. In terms of biological role, exonuclease involved in the 3' processing of various precursor tRNAs. Initiates hydrolysis at the 3'-terminus of an RNA molecule and releases 5'-mononucleotides. This Serratia proteamaculans (strain 568) protein is Ribonuclease D.